We begin with the raw amino-acid sequence, 227 residues long: UPF0173 metal-dependent hydrolase BPUM_2573 (227 aa).

The protein belongs to the UPF0173 family.

This Bacillus pumilus (strain SAFR-032) protein is UPF0173 metal-dependent hydrolase BPUM_2573.